A 255-amino-acid polypeptide reads, in one-letter code: 5-oxoprolinase subunit A (255 aa).

Belongs to the LamB/PxpA family. Forms a complex composed of PxpA, PxpB and PxpC.

The enzyme catalyses 5-oxo-L-proline + ATP + 2 H2O = L-glutamate + ADP + phosphate + H(+). In terms of biological role, catalyzes the cleavage of 5-oxoproline to form L-glutamate coupled to the hydrolysis of ATP to ADP and inorganic phosphate. This chain is 5-oxoprolinase subunit A, found in Campylobacter jejuni subsp. jejuni serotype O:6 (strain 81116 / NCTC 11828).